We begin with the raw amino-acid sequence, 249 residues long: Flagellar brake protein YcgR (249 aa).

Residues 117–236 (QRREFFRVDA…ERELQQVIFS (120 aa)) form the PilZ domain.

The protein belongs to the YcgR family. As to quaternary structure, monomer. Interacts with the flagellar basal bodies.

It localises to the bacterial flagellum basal body. In terms of biological role, acts as a flagellar brake, regulating swimming and swarming in a bis-(3'-5') cyclic diguanylic acid (c-di-GMP)-dependent manner. Binds 1 c-di-GMP dimer per subunit. Increasing levels of c-di-GMP lead to decreased motility. This Erwinia tasmaniensis (strain DSM 17950 / CFBP 7177 / CIP 109463 / NCPPB 4357 / Et1/99) protein is Flagellar brake protein YcgR.